Consider the following 462-residue polypeptide: Cytochrome P450 20A1 (462 aa).

A helical membrane pass occupies residues 4–24 (FAIFAVTFLLALVGAVLYLYP). Cysteine 409 provides a ligand contact to heme.

This sequence belongs to the cytochrome P450 family. Heme serves as cofactor.

Its subcellular location is the membrane. This Bos taurus (Bovine) protein is Cytochrome P450 20A1 (CYP20A1).